A 139-amino-acid polypeptide reads, in one-letter code: Putative pre-16S rRNA nuclease (139 aa).

The protein belongs to the YqgF nuclease family.

Its subcellular location is the cytoplasm. Functionally, could be a nuclease involved in processing of the 5'-end of pre-16S rRNA. In Streptococcus pyogenes serotype M49 (strain NZ131), this protein is Putative pre-16S rRNA nuclease.